The following is a 323-amino-acid chain: Chitin-binding lectin 1 (323 aa).

The N-terminal stretch at 1 to 22 (MKETAISVLALLTLFLLEVVSA) is a signal peptide. 4 positions are modified to 4-hydroxyproline: P50, P51, P53, and P55. O-linked (Ara...) hydroxyproline glycosylation is found at P50, P51, P53, and P55. 2 Chitin-binding type-1 domains span residues 58 to 101 (YPQC…QCPG) and 105 to 149 (EGRC…QCKL). Intrachain disulfides connect C61–C77, C70–C83, C76–C90, C95–C99, C108–C125, C117–C131, C124–C138, and C143–C147. S78, W80, W82, and Y89 together coordinate chitin. The segment at 150–210 (PSPPPPPPPP…PPPPPPALPY (61 aa)) is extensin-like. The O-linked (Gal) serine glycan is linked to S151. A run of 10 repeats spans residues 151–159 (SPPPPPPPP), 160–164 (SPPPP), 165–167 (SPP), 168–172 (SPPPP), 173–180 (SPPPPPPP), 181–185 (SPPPP), 186–190 (SPPPP), 191–192 (SP), 193–198 (SPPPPP), and 200–206 (SPPPPPP). A 10 X approximate repeats of S-P-P-P-P region spans residues 151-206 (SPPPPPPPPSPPPPSPPSPPPPSPPPPPPPSPPPPSPPPPSPSPPPPPASPPPPPP). P152, P153, P154, P155, P156, P157, P158, and P159 each carry 4-hydroxyproline. O-linked (Ara...) hydroxyproline glycans are attached at residues P152, P153, P154, P155, P156, P157, P158, and P159. The segment at 154–203 (PPPPPPSPPPPSPPSPPPPSPPPPPPPSPPPPSPPPPSPSPPPPPASPPP) is disordered. A glycan (O-linked (Gal) serine) is linked at S160. 4-hydroxyproline is present on residues P161, P162, P163, and P164. O-linked (Ara...) hydroxyproline glycans are attached at residues P161, P162, P163, and P164. O-linked (Gal) serine glycosylation is present at S165. P166 and P167 each carry 4-hydroxyproline. Residues P166 and P167 are each glycosylated (O-linked (Ara...) hydroxyproline). O-linked (Gal) serine glycosylation is present at S168. 4-hydroxyproline is present on residues P169, P170, P171, and P172. 4 O-linked (Ara...) hydroxyproline glycosylation sites follow: P169, P170, P171, and P172. A glycan (O-linked (Gal) serine) is linked at S173. 4-hydroxyproline is present on residues P174, P175, P176, P177, P178, P179, and P180. P174, P175, P176, P177, P178, P179, and P180 each carry an O-linked (Ara...) hydroxyproline glycan. An O-linked (Gal) serine glycan is attached at S181. 4 positions are modified to 4-hydroxyproline: P182, P183, P184, and P185. 4 O-linked (Ara...) hydroxyproline glycosylation sites follow: P182, P183, P184, and P185. An O-linked (Gal) serine glycan is attached at S186. A 4-hydroxyproline mark is found at P187, P188, P189, and P190. O-linked (Ara...) hydroxyproline glycosylation is found at P187, P188, P189, and P190. The O-linked (Gal) serine glycan is linked to S191. At P192 the chain carries 4-hydroxyproline. An O-linked (Ara...) hydroxyproline glycan is attached at P192. Residue S193 is glycosylated (O-linked (Gal) serine). Residues P194, P195, P196, P197, and P198 each carry the 4-hydroxyproline modification. 5 O-linked (Ara...) hydroxyproline glycosylation sites follow: P194, P195, P196, P197, and P198. S200 is a glycosylation site (O-linked (Gal) serine). P201, P202, P203, P204, P205, P206, and P209 each carry 4-hydroxyproline. Residues P201, P202, P203, P204, P205, P206, and P209 are each glycosylated (O-linked (Ara...) hydroxyproline). Chitin-binding type-1 domains are found at residues 210-253 (YPQC…QCPG) and 257-301 (EGRC…QCNT). 8 cysteine pairs are disulfide-bonded: C213/C229, C222/C235, C228/C242, C247/C251, C260/C277, C269/C283, C276/C290, and C295/C299. Chitin is bound by residues S230, W232, W234, and Y241.

The protein in the central section; belongs to the extensin family. Homodimer. In terms of processing, heavily glycosylated with beta-arabinose on hydroxyprolines and with alpha-galactose on serines of the extensin-like domain. As no other sugars could be detected in the native lectin, it is unlikely that the three putative N-glycosylation sites are actually glycosylated. Post-translationally, the N-terminus is blocked. The N-terminal sequences proposed in PubMed:9022287 and PubMed:11056399 originate probably from truncated proteins.

Its function is as follows. This protein might function as a defense against chitin containing pathogens. Binds to several branched or linear N-acetyllactosamine-containing glycosphingolipids and also to lactosylceramide with sphingosine and non-hydroxy fatty acids. The chain is Chitin-binding lectin 1 from Solanum tuberosum (Potato).